The chain runs to 125 residues: Holo-[acyl-carrier-protein] synthase (125 aa).

Residues Asp8 and Glu57 each contribute to the Mg(2+) site.

This sequence belongs to the P-Pant transferase superfamily. AcpS family. Requires Mg(2+) as cofactor.

It localises to the cytoplasm. The enzyme catalyses apo-[ACP] + CoA = holo-[ACP] + adenosine 3',5'-bisphosphate + H(+). In terms of biological role, transfers the 4'-phosphopantetheine moiety from coenzyme A to a Ser of acyl-carrier-protein. This Aromatoleum aromaticum (strain DSM 19018 / LMG 30748 / EbN1) (Azoarcus sp. (strain EbN1)) protein is Holo-[acyl-carrier-protein] synthase.